A 178-amino-acid chain; its full sequence is ATP synthase subunit b (178 aa).

Residues 19–39 (ITGIGFVILLFIAIKYIVPAF) form a helical membrane-spanning segment.

The protein belongs to the ATPase B chain family. As to quaternary structure, F-type ATPases have 2 components, F(1) - the catalytic core - and F(0) - the membrane proton channel. F(1) has five subunits: alpha(3), beta(3), gamma(1), delta(1), epsilon(1). F(0) has three main subunits: a(1), b(2) and c(10-14). The alpha and beta chains form an alternating ring which encloses part of the gamma chain. F(1) is attached to F(0) by a central stalk formed by the gamma and epsilon chains, while a peripheral stalk is formed by the delta and b chains.

The protein localises to the cell membrane. Functionally, f(1)F(0) ATP synthase produces ATP from ADP in the presence of a proton or sodium gradient. F-type ATPases consist of two structural domains, F(1) containing the extramembraneous catalytic core and F(0) containing the membrane proton channel, linked together by a central stalk and a peripheral stalk. During catalysis, ATP synthesis in the catalytic domain of F(1) is coupled via a rotary mechanism of the central stalk subunits to proton translocation. In terms of biological role, component of the F(0) channel, it forms part of the peripheral stalk, linking F(1) to F(0). In Kocuria rhizophila (strain ATCC 9341 / DSM 348 / NBRC 103217 / DC2201), this protein is ATP synthase subunit b.